Consider the following 95-residue polypeptide: Cliotide T5 (95 aa).

The segment at residues 1 to 30 (GIPCGESCVFIPCISTVIGCSCKNKVCYRN) is a cross-link (cyclopeptide (Gly-Asn)). Intrachain disulfides connect C4–C20, C8–C22, and C13–C27. Positions 31 to 95 (HVIAAEAKTM…KDHLKMSITN (65 aa)) are cleaved as a propeptide — removed in mature form.

Post-translationally, contains 3 disulfide bonds. In terms of processing, this is a cyclic peptide. As to expression, expressed in stem, shoot, root, leaf, pod and nodule but not in flower and seed (at protein level).

In terms of biological role, probably participates in a plant defense mechanism. The sequence is that of Cliotide T5 from Clitoria ternatea (Butterfly pea).